A 428-amino-acid chain; its full sequence is PGL/p-HBAD biosynthesis glycosyltransferase MRA_2985 (428 aa).

The interval 1-23 (MEETSVAGDPGPDAGTSTAPNAA) is disordered.

Belongs to the UDP-glycosyltransferase family.

Its function is as follows. Involved in glycosylation steps downstream of mono-O-methyl-glycosyl-p-hydroxybenzoic acid derivative (p-HBAD I) and 2-O-methyl-rhamnosyl-phenolphthiocerol dimycocerosate (mycoside B) during the p-hydroxybenzoic acid derivatives (p-HBAD) and glycosylated phenolphthiocerol dimycocerosates (PGL) biosynthesis. This Mycobacterium tuberculosis (strain ATCC 25177 / H37Ra) protein is PGL/p-HBAD biosynthesis glycosyltransferase MRA_2985.